Consider the following 1025-residue polypeptide: Multidrug resistance protein MdtC (1025 aa).

The next 12 membrane-spanning stretches (helical) occupy residues 3–23, 333–353, 360–380, 387–407, 431–451, 463–483, 528–548, 853–873, 875–895, 897–917, 953–973, and 984–1004; these read FFAL…AITL, EVEQ…FLFL, IIPA…MYLC, LSLM…IVVL, VGFT…PLLL, FAVT…TLTP, LVGV…ISIP, VILI…LYES, VHPL…LLAL, LFNA…IGIV, PIMM…LSGG, and ITIV…TPVV.

The protein belongs to the resistance-nodulation-cell division (RND) (TC 2.A.6) family. MdtC subfamily. As to quaternary structure, part of a tripartite efflux system composed of MdtA, MdtB and MdtC. MdtC forms a heteromultimer with MdtB.

The protein localises to the cell inner membrane. The MdtABC tripartite complex confers resistance against novobiocin and deoxycholate. The sequence is that of Multidrug resistance protein MdtC from Escherichia coli O7:K1 (strain IAI39 / ExPEC).